Consider the following 130-residue polypeptide: Transcription antitermination protein NusB (130 aa).

It belongs to the NusB family.

Its function is as follows. Involved in transcription antitermination. Required for transcription of ribosomal RNA (rRNA) genes. Binds specifically to the boxA antiterminator sequence of the ribosomal RNA (rrn) operons. This Bacillus mycoides (strain KBAB4) (Bacillus weihenstephanensis) protein is Transcription antitermination protein NusB.